A 255-amino-acid polypeptide reads, in one-letter code: Zinc D-Ala-D-Ala carboxypeptidase (255 aa).

The signal sequence occupies residues 1 to 42; sequence MRPRPIRLLLTALVGAGLAFAPVSAVAAPTATASASADVGAL. Aspartate 43 is subject to Blocked amino end (Asp). Intrachain disulfides connect cysteine 45–cysteine 123 and cysteine 136–cysteine 184. Arginine 180 serves as a coordination point for substrate. Histidine 196 contacts Zn(2+). Cysteines 212 and 253 form a disulfide. Histidine 234 acts as the Proton donor in catalysis. The Zn(2+) site is built by histidine 237 and histidine 239.

This sequence belongs to the peptidase M15 family. Zn(2+) is required as a cofactor. The N-terminus is partially blocked as a result of the cyclization of the first two amino acids into anhydroaspartylglycine imide.

Its subcellular location is the secreted. The enzyme catalyses Cleavage of the bond: (Ac)2-L-lysyl-D-alanyl-|-D-alanine.. Its function is as follows. This enzyme catalyzes carboxypeptidation and transpeptidation reactions involved in bacterial cell wall metabolism. It effectively catalyzes the transfer of the N-alpha, N-epsilon-diacetyl-L-lysyl-D-alanyl electrophilic group of the standard tripeptide substrate N-alpha,N-epsilon-diacetyl-L-lysyl-D-alanyl-D-alanine to water. It also performs a weak beta-lactamase activity, hydrolyzing penicillin into penicilloate at a very low rate. The sequence is that of Zinc D-Ala-D-Ala carboxypeptidase from Streptomyces albus G.